The chain runs to 219 residues: Antigen 5 like allergen Cul n 1 (219 aa).

Positions 1-19 (MIKKLSIVILFSCISFVLS) are cleaved as a signal peptide. 3 disulfides stabilise this stretch: Cys-23–Cys-45, Cys-28–Cys-124, and Cys-55–Cys-117. The 139-residue stretch at 73-211 (LKVHNRLRNK…RHSGNKYFFW (139 aa)) folds into the SCP domain.

It belongs to the CRISP family. Expressed in salivary glands.

The protein resides in the secreted. This Culicoides nubeculosus (Biting midge) protein is Antigen 5 like allergen Cul n 1.